The sequence spans 89 residues: Small ribosomal subunit protein uS15 (89 aa).

The protein belongs to the universal ribosomal protein uS15 family. As to quaternary structure, part of the 30S ribosomal subunit. Forms a bridge to the 50S subunit in the 70S ribosome, contacting the 23S rRNA.

In terms of biological role, one of the primary rRNA binding proteins, it binds directly to 16S rRNA where it helps nucleate assembly of the platform of the 30S subunit by binding and bridging several RNA helices of the 16S rRNA. Forms an intersubunit bridge (bridge B4) with the 23S rRNA of the 50S subunit in the ribosome. This Thermus thermophilus (strain ATCC BAA-163 / DSM 7039 / HB27) protein is Small ribosomal subunit protein uS15.